An 861-amino-acid polypeptide reads, in one-letter code: Ataxin-7-like protein 1 (861 aa).

Disordered stretches follow at residues 1–31 (MTSERSRIPCLSAAAAEGTGKKQQEGRAMAT), 154–189 (GHHSASSTSKPFKTPKDNLLTSSSKQHTVFPAKGSR), 342–448 (KSRE…GADE), 606–673 (PIPA…LSGP), and 772–861 (FDKS…RTLP). The region spanning 284-351 (RRLSEREFDP…KSREKEVKDK (68 aa)) is the SCA7 domain. Basic and acidic residues predominate over residues 342-354 (KSREKEVKDKEHL). Over residues 355–369 (LTSTREILPSQSGPA) the composition is skewed to polar residues. 3 stretches are compositionally biased toward low complexity: residues 372-381 (SLLGSSGSSG), 403-417 (SSANSISSSTSSNHS), and 606-616 (PIPAVIPSPSH). A compositionally biased stretch (basic residues) spans 617–627 (KPSKTKTSKSS). Basic and acidic residues predominate over residues 628 to 641 (KVKDLSTRSDESPS). Composition is skewed to low complexity over residues 648-671 (QSSTSSSSSSSSSSLQTSLSSPLS) and 783-794 (SSSSSKACKITK). Positions 817–828 (VNSTSSRQVGKN) are enriched in polar residues. The segment covering 829–847 (SSLALSQSSPSSISSPGHS) has biased composition (low complexity).

The chain is Ataxin-7-like protein 1 (ATXN7L1) from Homo sapiens (Human).